Consider the following 444-residue polypeptide: Serine carboxypeptidase 2 (444 aa).

Residue 60-62 (NGG) coordinates substrate. Intrachain disulfides connect Cys65–Cys324, Cys222–Cys234, and Cys258–Cys291. Asn116 and Asn127 each carry an N-linked (GlcNAc...) asparagine glycan. 157-159 (ESY) provides a ligand contact to substrate. Ser158 is a catalytic residue. An N-linked (GlcNAc...) asparagine glycan is attached at Asn259. The propeptide at 260 to 286 (ITSSSSSSSSSLSQQRRSRGRYPWLTG) is linker peptide. Asn312 and Asn318 each carry an N-linked (GlcNAc...) asparagine glycan. Active-site residues include Asp361 and His413. Substrate is bound at residue 409–413 (RGAGH).

The protein belongs to the peptidase S10 family. Carboxypeptidase II is a dimer, where each monomer is composed of two chains linked by a disulfide bond. N-glycosylated.

The catalysed reaction is Preferential release of a C-terminal arginine or lysine residue.. The chain is Serine carboxypeptidase 2 (CBP2) from Triticum aestivum (Wheat).